We begin with the raw amino-acid sequence, 513 residues long: Histidine ammonia-lyase (513 aa).

Positions 143–145 (ASG) form a cross-link, 5-imidazolinone (Ala-Gly). Serine 144 is subject to 2,3-didehydroalanine (Ser).

The protein belongs to the PAL/histidase family. Contains an active site 4-methylidene-imidazol-5-one (MIO), which is formed autocatalytically by cyclization and dehydration of residues Ala-Ser-Gly.

It is found in the cytoplasm. It catalyses the reaction L-histidine = trans-urocanate + NH4(+). It functions in the pathway amino-acid degradation; L-histidine degradation into L-glutamate; N-formimidoyl-L-glutamate from L-histidine: step 1/3. In Paracoccus denitrificans (strain Pd 1222), this protein is Histidine ammonia-lyase.